Here is a 274-residue protein sequence, read N- to C-terminus: Diaminopimelate epimerase (274 aa).

3 residues coordinate substrate: Asn-11, Gln-44, and Asn-64. The Proton donor role is filled by Cys-73. Substrate contacts are provided by residues Gly-74–Asn-75, Asn-157, Asn-190, and Glu-208–Arg-209. Cys-217 (proton acceptor) is an active-site residue. Gly-218–Ser-219 provides a ligand contact to substrate.

It belongs to the diaminopimelate epimerase family. In terms of assembly, homodimer.

It localises to the cytoplasm. It carries out the reaction (2S,6S)-2,6-diaminopimelate = meso-2,6-diaminopimelate. Its pathway is amino-acid biosynthesis; L-lysine biosynthesis via DAP pathway; DL-2,6-diaminopimelate from LL-2,6-diaminopimelate: step 1/1. Functionally, catalyzes the stereoinversion of LL-2,6-diaminopimelate (L,L-DAP) to meso-diaminopimelate (meso-DAP), a precursor of L-lysine and an essential component of the bacterial peptidoglycan. This Yersinia pseudotuberculosis serotype O:1b (strain IP 31758) protein is Diaminopimelate epimerase.